Reading from the N-terminus, the 236-residue chain is Rho-related GTP-binding protein RhoV (236 aa).

Residues M1–P27 are disordered. Residues E10 to P20 show a composition bias toward pro residues. At S25 the chain carries Phosphoserine. GTP-binding positions include G38–S45, D85–Q89, and T143–D146. C234 is lipidated: S-palmitoyl cysteine.

It belongs to the small GTPase superfamily. Rho family. As to quaternary structure, interacts with PAK2. It depends on Mg(2+) as a cofactor.

The protein resides in the cell membrane. It is found in the endosome membrane. In terms of biological role, plays a role in the control of the actin cytoskeleton via activation of the JNK pathway. This chain is Rho-related GTP-binding protein RhoV, found in Mus musculus (Mouse).